A 340-amino-acid polypeptide reads, in one-letter code: Lipase chaperone (340 aa).

A helical membrane pass occupies residues 4 to 24 (ILLLIPLAFAASLAWFVWLEP). Positions 29 to 51 (ETAPPASPQAGADRAPPAASAGE) are disordered. The span at 36-51 (PQAGADRAPPAASAGE) shows a compositional bias: low complexity.

The protein belongs to the lipase chaperone family.

The protein localises to the cell inner membrane. Its function is as follows. May be involved in the folding of the extracellular lipase during its passage through the periplasm. The chain is Lipase chaperone (lifO) from Pseudomonas aeruginosa (strain ATCC 15692 / DSM 22644 / CIP 104116 / JCM 14847 / LMG 12228 / 1C / PRS 101 / PAO1).